The primary structure comprises 197 residues: Probable host range protein 2 (197 aa).

Residues 172–197 form a disordered region; that stretch reads DHDDNDNADDDEEDDDEVNDIEDDYE. Residues 174 to 197 show a composition bias toward acidic residues; sequence DDNDNADDDEEDDDEVNDIEDDYE.

This sequence belongs to the poxviridae C7 protein family.

In Ovis aries (Sheep), this protein is Probable host range protein 2.